Here is a 111-residue protein sequence, read N- to C-terminus: Protein GLUTAMINE DUMPER 6 (111 aa).

Over 1–16 (MRPTPKVEIWKSPVPY) the chain is Extracellular. Residues 17–37 (LFGGLFLLVLLIALALLSLVC) form a helical membrane-spanning segment. At 38-111 (THQKPSSSSN…NCDNVTVIST (74 aa)) the chain is on the cytoplasmic side. Residues 40–49 (QKPSSSSNNN) are compositionally biased toward polar residues. A disordered region spans residues 40-63 (QKPSSSSNNNHMDEEDDVGDKDAK). A VIMAG; degenerate motif is present at residues 75–79 (VILAG).

This sequence belongs to the GLUTAMINE DUMPER 1 (TC 9.B.60) family. Expressed in the vascular tissues.

It is found in the membrane. Its function is as follows. Probable subunit of an amino acid transporter involved in the regulation of the amino acid metabolism. Stimulates amino acid export by activating nonselective amino acid facilitators. This chain is Protein GLUTAMINE DUMPER 6 (GDU6), found in Arabidopsis thaliana (Mouse-ear cress).